Reading from the N-terminus, the 321-residue chain is Glucokinase (321 aa).

8–13 (GDVGGT) is an ATP binding site.

This sequence belongs to the bacterial glucokinase family.

It is found in the cytoplasm. It carries out the reaction D-glucose + ATP = D-glucose 6-phosphate + ADP + H(+). The chain is Glucokinase from Salmonella heidelberg (strain SL476).